The sequence spans 1510 residues: MSDVFELENEIELESDEVIMENENVEEIVDAPMPFSMTTNNGVERGKFRSLTLINWNGFFARTFDLDELVTTLSGGNGAGKSTTMAGFVTALIPDLTLLHFRNTTEAGSTGGSRDKGLHGKLRPGVCYAVLDTINSRHQRILVGVRLQQIAGRDKKVDLKTFSIQGVELSQNPTALFTETVGERQARVLNLNELKDKIENIGAQFKQYHSITDYHGMMFDLGIIPKRLRSASDRSKFYKLIEASLYGGISSAITRSLRDYLLPENLGVRKAFQDMESALRENRMTLEAIKVTQSDRNLFKHLITETTNYVASDYMRNANERRGNIEAALESRREWYKAKAEQNLSQHRLVDLSREAAELAENERTLEVDHQSAVDHLNLVLNALRHQEKITRYQEDIAELTERLEEQKIVVEDANDALEESQAQFEQTEIEIDAVRAQLADYQQALDAQQTRALQYQQAITALEKAKTLCGLADLSVKNVEDYHAEFEAHAESLTETVLELEHKMSISEAAKSQFDKAYQLVCKIAGEIPRSSAWESAKELLREYPSQKLQAQQTPQLRTKLHELEQRYAQQQSAVKLLNDFNQRANLSLQTAEELEDYHAEQEALIEDISARLSEQVENRSTLRQKRENLTALYDENARKAPAWLTAQAALERLEQQSGETFEHSQDVMNFMQSQLVKERELTMQRDQLEQKRLQLDEQISRLSQPDGSEDPRLNMLAERFGGVLLSELYDDVTIEDAPYFSALYGPARHAIVVRDLNAVREQLAQLEDCPDDLYLIEGDPTAFDDSVLSAQELELGVVVQVSDRELRYSRFPEIPLFGRAAREKRLEELQIERDEVAEQYAQIAFDVQKCQRLHEHFSQFVGLHLALAFQPNPEELMSEINRERNEIDRELNQFNNGEQQLRIQLDNAKEKLQLLNKLIPQLNVLTDEDLIDRIEECREQLDIAEQDEYFIRQYGVTLSQLEPIANSLQSDPENYDGLKNELTQAIERQKQVQQRVFALADVVQRKHHFGYEDAGQAKTSELNEKLRQRLEQMQAQRDMQREQVRQKQSQFAEYNRVLIQLQSSYDSKYQLLNELISEISDLGVRADDGAEERARIRRDELHQQLSTSRQRRSYVEKQLTLIESEADNLNRLIRKTERDYKTQRELVVAAKVSWCVVLRLSRNSDMEKRLNRRELAYLSADELRSMSDKALGALRTAVADNEYLRDSLRVSEDSRKPENKVRFFIAVYQHLRERIRQDIIKTDDPIDAIEQMEIELSRLTAELTGREKKLAISSESVANIMRKTIQREQNRIRMLNQGLQNISFGQVKSVRLVVNIRDTHAMLLDALSGQQDEYQDLFNDNCITFSEAMAKLYQRINPHIDMGQRTAQTIGEELLDYRNYLELEVEVFRGADGWLRAESGALSTGEAIGTGMSILLMVVQSWEEESRRIRGKDIVPCRLLFLDEAARLDGKSISTLFELCERLDMQLLIAAPENISPEKGTTYKLVRKIAGNQEHVHVVGLRGFGATE.

Positions 6–30 (ELENEIELESDEVIMENENVEEIVD) form a coiled coil. 75-82 (GGNGAGKS) provides a ligand contact to ATP. 7 coiled-coil regions span residues 346-506 (QHRL…HKMS), 553-633 (QQTP…NLTA), 673-706 (MQSQ…RLSQ), 821-847 (RAAR…QIAF), 876-1064 (EELM…IQLQ), 1094-1149 (ERAR…RELV), and 1249-1305 (DAIE…QNIS). A flexible hinge region spans residues 707-824 (PDGSEDPRLN…EIPLFGRAAR (118 aa)).

This sequence belongs to the SMC family. MukB subfamily. As to quaternary structure, homodimerization via its hinge domain. Binds to DNA via its C-terminal region. Interacts, and probably forms a ternary complex, with MukE and MukF via its C-terminal region. The complex formation is stimulated by calcium or magnesium. Interacts with tubulin-related protein FtsZ.

It is found in the cytoplasm. It localises to the nucleoid. Functionally, plays a central role in chromosome condensation, segregation and cell cycle progression. Functions as a homodimer, which is essential for chromosome partition. Involved in negative DNA supercoiling in vivo, and by this means organize and compact chromosomes. May achieve or facilitate chromosome segregation by condensation DNA from both sides of a centrally located replisome during cell division. The protein is Chromosome partition protein MukB of Haemophilus influenzae (strain 86-028NP).